Here is a 94-residue protein sequence, read N- to C-terminus: NADH-ubiquinone oxidoreductase 10.5 kDa subunit (94 aa).

Belongs to the complex I NDUFA2 subunit family. As to quaternary structure, complex I is composed of about 40 different subunits.

The protein resides in the mitochondrion inner membrane. Functionally, accessory subunit of the mitochondrial membrane respiratory chain NADH dehydrogenase (Complex I), that is believed not to be involved in catalysis. Complex I functions in the transfer of electrons from NADH to the respiratory chain. The immediate electron acceptor for the enzyme is believed to be ubiquinone. The polypeptide is NADH-ubiquinone oxidoreductase 10.5 kDa subunit (nuo-10.5) (Neurospora crassa (strain ATCC 24698 / 74-OR23-1A / CBS 708.71 / DSM 1257 / FGSC 987)).